We begin with the raw amino-acid sequence, 486 residues long: PTS system N-acetylmuramic acid-specific EIIBC component (486 aa).

The PTS EIIB type-1 domain maps to 1–89 (MAKITQTMIS…NKLIESVING (89 aa)). C28 acts as the Phosphocysteine intermediate; for EIIB activity in catalysis. One can recognise a PTS EIIC type-1 domain in the interval 127 to 486 (SKFATIFTPL…FFGSKDVDLS (360 aa)). 10 consecutive transmembrane segments (helical) span residues 129–149 (FATI…LLGF), 170–190 (LIAY…ILIG), 196–216 (AFGG…LGYN), 230–250 (FFGY…AAII), 268–288 (MILT…VVIM), 312–332 (AAIL…QGFV), 347–367 (LFPI…ALYF), 381–401 (GAII…VTLP), 411–431 (IGGA…LPVG), and 453–473 (IFAG…VGFL).

Its subcellular location is the cell inner membrane. It catalyses the reaction N-acetyl-beta-D-muramate(out) + N(pros)-phospho-L-histidyl-[protein] = N-acetyl-beta-D-muramate 6-phosphate(in) + L-histidyl-[protein]. The phosphoenolpyruvate-dependent sugar phosphotransferase system (sugar PTS), a major carbohydrate active transport system, catalyzes the phosphorylation of incoming sugar substrates concomitantly with their translocation across the cell membrane. This system is involved in N-acetylmuramic acid (MurNAc) transport, yielding cytoplasmic MurNAc-6-P. Is also able to take up anhydro-N-acetylmuramic acid (anhMurNAc), but cannot phosphorylate the carbon 6, probably because of the 1,6-anhydro ring. The chain is PTS system N-acetylmuramic acid-specific EIIBC component (murP) from Vibrio vulnificus (strain YJ016).